The chain runs to 151 residues: SsrA-binding protein (151 aa).

This sequence belongs to the SmpB family.

It localises to the cytoplasm. Required for rescue of stalled ribosomes mediated by trans-translation. Binds to transfer-messenger RNA (tmRNA), required for stable association of tmRNA with ribosomes. tmRNA and SmpB together mimic tRNA shape, replacing the anticodon stem-loop with SmpB. tmRNA is encoded by the ssrA gene; the 2 termini fold to resemble tRNA(Ala) and it encodes a 'tag peptide', a short internal open reading frame. During trans-translation Ala-aminoacylated tmRNA acts like a tRNA, entering the A-site of stalled ribosomes, displacing the stalled mRNA. The ribosome then switches to translate the ORF on the tmRNA; the nascent peptide is terminated with the 'tag peptide' encoded by the tmRNA and targeted for degradation. The ribosome is freed to recommence translation, which seems to be the essential function of trans-translation. This chain is SsrA-binding protein, found in Flavobacterium johnsoniae (strain ATCC 17061 / DSM 2064 / JCM 8514 / BCRC 14874 / CCUG 350202 / NBRC 14942 / NCIMB 11054 / UW101) (Cytophaga johnsonae).